The following is a 1220-amino-acid chain: Myosin-2 (1220 aa).

Residues 1–12 (MMLSASPNTLAK) are compositionally biased toward polar residues. Disordered stretches follow at residues 1–54 (MMLS…ARRS) and 68–95 (QNGSVVSVTPAVEAESERKEEGVKRKEK). A compositionally biased stretch (basic and acidic residues) spans 20–33 (ESLRQKDECDRPKD). Low complexity predominate over residues 40–54 (SRPNSRARLPSARRS). Basic and acidic residues predominate over residues 82–95 (ESERKEEGVKRKEK). One can recognise a Myosin N-terminal SH3-like domain in the interval 160 to 209 (KKKLRVWCRVSNGQWQLGKIQSTSADTSLVMLSTANVVKVSTEELFPANP). A Myosin motor domain is found at 213–879 (EGVEDLIQLS…QIGIFEDRRK (667 aa)). ATP-binding positions include 304-311 (GESGAGKT) and 353-361 (NANSSRFGK). Actin-binding regions lie at residues 638-672 (LIEKKPIGLLSLLDEESNFPKATDLTFANKLKQHL) and 759-781 (LFKLMNKLENTSPHFIRCIKPNS). IQ domains are found at residues 881 to 910 (VLQGIVGLQKHFRGHLSRAYFQNMRKVTLV), 904 to 933 (MRKVTLVLQSYIRGENARRLFDTEAKFHAD), and 942 to 971 (ELSAVIHLQSAVRGWLARKHFNSMQRQKEL). Disordered stretches follow at residues 968-1007 (QKELRNVATKSKRKAGRRISEDKDIPLEQPQVQPTSMSDL) and 1075-1118 (SITG…NGNT). Polar residues-rich tracts occupy residues 997–1006 (PQVQPTSMSD) and 1098–1118 (TMSTGTPGVRTPTNKFTNGNT). A coiled-coil region spans residues 1003–1071 (SMSDLQKRIL…MSLAAARKSL (69 aa)).

This sequence belongs to the TRAFAC class myosin-kinesin ATPase superfamily. Myosin family. Plant myosin class VIII subfamily. As to quaternary structure, homodimer. Expressed in flowers, leaves and roots.

The protein localises to the cell junction. It localises to the plasmodesma. It is found in the endosome. Its function is as follows. Myosin heavy chain that is required for the cell cycle-regulated transport of various organelles and proteins for their segregation. Functions by binding with its tail domain to receptor proteins on organelles and exerting force with its N-terminal motor domain against actin filaments, thereby transporting its cargo along polarized actin cables. Involved in endocytosis via its action in endosomal trafficking. The polypeptide is Myosin-2 (VIII-2) (Arabidopsis thaliana (Mouse-ear cress)).